The sequence spans 205 residues: High frequency lysogenization protein HflD homolog (205 aa).

The protein belongs to the HflD family.

Its subcellular location is the cytoplasm. It is found in the cell inner membrane. This Shewanella baltica (strain OS185) protein is High frequency lysogenization protein HflD homolog.